A 412-amino-acid chain; its full sequence is 8-amino-7-oxononanoate synthase (412 aa).

Arg-28 contributes to the substrate binding site. Residue 115–116 (GY) participates in pyridoxal 5'-phosphate binding. His-140 is a binding site for substrate. The pyridoxal 5'-phosphate site is built by Ser-186, His-214, and Thr-246. N6-(pyridoxal phosphate)lysine is present on Lys-249. Thr-367 is a substrate binding site.

It belongs to the class-II pyridoxal-phosphate-dependent aminotransferase family. BioF subfamily. Homodimer. Requires pyridoxal 5'-phosphate as cofactor.

The enzyme catalyses 6-carboxyhexanoyl-[ACP] + L-alanine + H(+) = (8S)-8-amino-7-oxononanoate + holo-[ACP] + CO2. The protein operates within cofactor biosynthesis; biotin biosynthesis. Its function is as follows. Catalyzes the decarboxylative condensation of pimeloyl-[acyl-carrier protein] and L-alanine to produce 8-amino-7-oxononanoate (AON), [acyl-carrier protein], and carbon dioxide. The chain is 8-amino-7-oxononanoate synthase from Paracidovorax citrulli (strain AAC00-1) (Acidovorax citrulli).